A 394-amino-acid polypeptide reads, in one-letter code: MSLQATPDDKFSFGLWTVGWQARDAFGDATRPVLDPIEAVHKLAEIGAYGVTFHDDDLVPFGADAATRDGIVAGFSKALDETGLIVPMVTTNLFTHPVFKDGGFTSNDRSVRRYAIRKVLRQMDLGAELGAKTLVLWGGREGAEYDSAKDVGAALDRYREALNLLAQYSEDQGYGLPFAIEPKPNEPRGDILLPTAGHAIAFVQELERPELFGINRETGHEQMSNLNFTQGIAQALWHKKLFHIDLNGQHGPKFDQDLVFGHGDLLNAFSLVDLLENGPDGGPAYDGPRHFDYKPSRTEDFDGVWESAKDNIRMYLLLKERAKAFRADPEVQAALAESKVDELRTPTLNPGETYADLLADRSAFEDYDADAVGAKGYGFVKLNQLAIDHLLGAR.

Catalysis depends on residues H54 and D57. Mg(2+) contacts are provided by E181, E217, H220, D245, D255, D257, and D292.

This sequence belongs to the xylose isomerase family. Homotetramer. Mg(2+) is required as a cofactor.

The protein resides in the cytoplasm. The catalysed reaction is alpha-D-xylose = alpha-D-xylulofuranose. The chain is Xylose isomerase (xylA) from Actinoplanes sp. (strain ATCC 31351 / 3876) (Ampullariella sp.).